The sequence spans 284 residues: Nodulation protein O (284 aa).

Positions 1–27 (MNIKGSDNGSFIKGSPENDIIDGGKKN) are disordered. Hemolysin-type calcium-binding repeat units lie at residues 13–30 (KGSPENDIIDGGKKNDWI), 31–48 (DAGNGDDRIKAGDGQDSI), 58–75 (WAGKGSDVIHADGGDDLL), 94–111 (HSGEGDDVLYAGPGSDIL), and 112–129 (VAGDGADVLTGGDDGDAF). Aspartate 100, aspartate 109, aspartate 118, and aspartate 127 together coordinate Ca(2+). The segment at 208 to 222 (DRGFASAAAAATAID) is export signal (aspartic acid box).

The protein resides in the secreted. Its function is as follows. The NodO protein may play a role in nodule development by direct interaction with the root hair cells or some other plant surface in a calcium-dependent manner. This chain is Nodulation protein O (nodO), found in Rhizobium leguminosarum bv. viciae.